Reading from the N-terminus, the 118-residue chain is DNA-binding protein inhibitor ID-3 (118 aa).

Residues 32 to 84 (SHKGPGVDEPMGLLYDMNGCYSKLKELVPGIPQGSKLSQVEILQHVIDYIFDL) enclose the bHLH domain.

In terms of assembly, homodimer. Heterodimer with other HLH proteins. Interacts (via HLH domain) with the bHLH protein hes4/hairy2 (via Orange domain). Interacts with stat3.

It is found in the nucleus. Its function is as follows. Transcriptional regulator (lacking a basic DNA binding domain) which negatively regulates the basic helix-loop-helix (bHLH) transcription factors by forming heterodimers and inhibiting their DNA binding and transcriptional activity. Influences cell fate decisions in the embryo by sequestering and blocking the activity of the bHLH transcription factors that control these decisions. Inhibits the binding of myogenic bHLH-containing complexes to E-box DNA, thereby preventing activation of muscle-specific target genes. Also inhibits the activity of neurogenic factor neurod1/neuroD. Plays a role in cell cycle progression and survival of neural crest progenitors; binding to either hes4-B/hairy2b or stat3 blocks the formation of transcription factor complexes and the repressor function of hes4-B/hairy2B, to allow neural crest progenitors to differentiate. May play a role in the regulation of the circadian rhythm. This chain is DNA-binding protein inhibitor ID-3 (id3), found in Xenopus tropicalis (Western clawed frog).